A 425-amino-acid polypeptide reads, in one-letter code: tRNA(Ile)-lysidine synthase (425 aa).

An ATP-binding site is contributed by 27–32 (SGGLDS).

The protein belongs to the tRNA(Ile)-lysidine synthase family.

The protein resides in the cytoplasm. It catalyses the reaction cytidine(34) in tRNA(Ile2) + L-lysine + ATP = lysidine(34) in tRNA(Ile2) + AMP + diphosphate + H(+). Ligates lysine onto the cytidine present at position 34 of the AUA codon-specific tRNA(Ile) that contains the anticodon CAU, in an ATP-dependent manner. Cytidine is converted to lysidine, thus changing the amino acid specificity of the tRNA from methionine to isoleucine. In Streptococcus gordonii (strain Challis / ATCC 35105 / BCRC 15272 / CH1 / DL1 / V288), this protein is tRNA(Ile)-lysidine synthase.